The primary structure comprises 223 residues: Adenylate kinase (223 aa).

10–15 (GSGKGT) provides a ligand contact to ATP. An NMP region spans residues 30–59 (ESGAIFREHIGGGTELGKQAKAFIERGDLV). AMP is bound by residues S31, R36, 57–59 (DLV), 84–87 (GFPR), and Q91. An LID region spans residues 125–164 (GRRLCKNDNNHPNNIFIDAIKPNGDVCRVCGGELSARSDD). R126 is a binding site for ATP. AMP contacts are provided by R161 and R173. G209 provides a ligand contact to ATP.

It belongs to the adenylate kinase family. As to quaternary structure, monomer.

Its subcellular location is the cytoplasm. The enzyme catalyses AMP + ATP = 2 ADP. It functions in the pathway purine metabolism; AMP biosynthesis via salvage pathway; AMP from ADP: step 1/1. Catalyzes the reversible transfer of the terminal phosphate group between ATP and AMP. Plays an important role in cellular energy homeostasis and in adenine nucleotide metabolism. The protein is Adenylate kinase of Nitratidesulfovibrio vulgaris (strain ATCC 29579 / DSM 644 / CCUG 34227 / NCIMB 8303 / VKM B-1760 / Hildenborough) (Desulfovibrio vulgaris).